Here is a 349-residue protein sequence, read N- to C-terminus: Thioredoxin reductase, mitochondrial (349 aa).

Residues 1-30 (MLLVRNSTLGRLSSLRGFFRNINESNIFYR) constitute a mitochondrion transit peptide. Residues 41–44 (SGPA), 70–71 (IA), Q75, N84, V117, C175, D318, and 325–327 (RQA) each bind FAD. Residues C172 and C175 are joined by a disulfide bond.

This sequence belongs to the class-II pyridine nucleotide-disulfide oxidoreductase family. In terms of assembly, homodimer. The cofactor is FAD.

It localises to the mitochondrion. The enzyme catalyses [thioredoxin]-dithiol + NADP(+) = [thioredoxin]-disulfide + NADPH + H(+). The polypeptide is Thioredoxin reductase, mitochondrial (TRR1) (Kluyveromyces lactis (strain ATCC 8585 / CBS 2359 / DSM 70799 / NBRC 1267 / NRRL Y-1140 / WM37) (Yeast)).